The sequence spans 304 residues: ATP synthase gamma chain (304 aa).

The protein belongs to the ATPase gamma chain family. In terms of assembly, F-type ATPases have 2 components, CF(1) - the catalytic core - and CF(0) - the membrane proton channel. CF(1) has five subunits: alpha(3), beta(3), gamma(1), delta(1), epsilon(1). CF(0) has three main subunits: a, b and c.

It is found in the cell membrane. Functionally, produces ATP from ADP in the presence of a proton gradient across the membrane. The gamma chain is believed to be important in regulating ATPase activity and the flow of protons through the CF(0) complex. The chain is ATP synthase gamma chain from Mycolicibacterium paratuberculosis (strain ATCC BAA-968 / K-10) (Mycobacterium paratuberculosis).